The chain runs to 237 residues: Proteasome subunit alpha type-5-A (237 aa).

N-acetylmethionine is present on M1. Glycyl lysine isopeptide (Lys-Gly) (interchain with G-Cter in ubiquitin) cross-links involve residues K43 and K66.

The protein belongs to the peptidase T1A family. As to quaternary structure, component of the 20S core complex of the 26S proteasome. The 26S proteasome is composed of a core protease (CP), known as the 20S proteasome, capped at one or both ends by the 19S regulatory particle (RP/PA700). The 20S proteasome core is composed of 28 subunits that are arranged in four stacked rings, resulting in a barrel-shaped structure. The two end rings are each formed by seven alpha subunits, and the two central rings are each formed by seven beta subunits. The catalytic chamber with the active sites is on the inside of the barrel.

The protein localises to the cytoplasm. The protein resides in the nucleus. Its function is as follows. The proteasome is a multicatalytic proteinase complex which is characterized by its ability to cleave peptides with Arg, Phe, Tyr, Leu, and Glu adjacent to the leaving group at neutral or slightly basic pH. The proteasome has an ATP-dependent proteolytic activity. This chain is Proteasome subunit alpha type-5-A (PAE1), found in Arabidopsis thaliana (Mouse-ear cress).